Here is a 696-residue protein sequence, read N- to C-terminus: D-(-)-3-hydroxybutyrate oligomer hydrolase (696 aa).

A signal peptide spans 1–20 (MTRLGWGRRMVFGAALAAVA). Ser309 functions as the Charge relay system in the catalytic mechanism.

Belongs to the D-(-)-3-hydroxybutyrate oligomer hydrolase family.

It is found in the secreted. The enzyme catalyses (3R)-hydroxybutanoate dimer + H2O = 2 (R)-3-hydroxybutanoate + H(+). The protein operates within lipid metabolism; butanoate metabolism. Its function is as follows. Participates in the degradation of poly-3-hydroxybutyrate (PHB). It works downstream of poly(3-hydroxybutyrate) depolymerase, hydrolyzing D(-)-3-hydroxybutyrate oligomers of various length (3HB-oligomers) into 3HB-monomers. In Burkholderia lata (strain ATCC 17760 / DSM 23089 / LMG 22485 / NCIMB 9086 / R18194 / 383), this protein is D-(-)-3-hydroxybutyrate oligomer hydrolase.